Consider the following 242-residue polypeptide: UPF0309 protein BMEA_B0892 (242 aa).

Positions 30–214 (AADLIAAAAR…ARLVGEGDAP (185 aa)) constitute an SIS domain.

It belongs to the UPF0309 family.

The polypeptide is UPF0309 protein BMEA_B0892 (Brucella melitensis biotype 2 (strain ATCC 23457)).